We begin with the raw amino-acid sequence, 1006 residues long: D-2-hydroxyglutarate dehydrogenase (1006 aa).

The region spanning 47 to 279 is the FAD-binding PCMH-type domain; that stretch reads YQRLPQAAVF…VEAKLNVLPI (233 aa). (R)-2-hydroxyglutarate is bound by residues Arg-397 and His-495. The 33-residue stretch at 655 to 687 folds into the 4Fe-4S ferredoxin-type domain; sequence SHEVYDAMAGCLACKSCAGQCPIKVNVPDFRSR. [4Fe-4S] cluster contacts are provided by Cys-665, Cys-668, Cys-671, and Cys-675.

This sequence in the N-terminal section; belongs to the FAD-binding oxidoreductase/transferase type 4 family. [4Fe-4S] cluster is required as a cofactor. The cofactor is FAD.

It carries out the reaction (R)-2-hydroxyglutarate + A = 2-oxoglutarate + AH2. It functions in the pathway amino-acid degradation. Catalyzes the oxidation of D-2-hydroxyglutarate (D-2-HGA) to 2-oxoglutarate. Is involved in a D-lysine catabolic pathway. In Pseudomonas putida (strain ATCC 47054 / DSM 6125 / CFBP 8728 / NCIMB 11950 / KT2440), this protein is D-2-hydroxyglutarate dehydrogenase.